The sequence spans 149 residues: Calmodulin-like protein 3 (149 aa).

EF-hand domains follow at residues 8–43 (EQVTEFKEAFSLFDKDGDGCITTRELGTVMRSLGQN), 44–79 (PTEAELRDMMSEIDRDGNGTVDFPEFLGMMARKMKD), 81–116 (DNEEEIREAFRVFDKDGNGFVSAAELRHVMTRLGEK), and 117–149 (LSDEEVDEMIRAADTDGDGQVNYEEFVRVLVSK). The Ca(2+) site is built by D21, D23, D25, C27, E32, D57, D59, N61, T63, E68, D94, D96, N98, E105, D130, D132, D134, Q136, and E141.

This sequence belongs to the calmodulin family. In terms of assembly, interacts with MYO10, the interaction is calcium-dependent and essential for MYO10 function in filopodial extension. As to expression, expressed in normal mammary, prostate, cervical, and epidermal tissues. It is greatly reduced or undetectable in transformed cells.

In terms of biological role, may function as a specific light chain of unconventional myosin-10 (MYO10), also enhances MYO10 translation, possibly by acting as a chaperone for the emerging MYO10 heavy chain protein. May compete with calmodulin by binding, with different affinities, to cellular substrates. In Homo sapiens (Human), this protein is Calmodulin-like protein 3 (CALML3).